The chain runs to 215 residues: Cytochrome b6 (215 aa).

A helical transmembrane segment spans residues isoleucine 32–phenylalanine 52. Cysteine 35 is a binding site for heme c. The heme b site is built by histidine 86 and histidine 100. 3 consecutive transmembrane segments (helical) span residues alanine 90–phenylalanine 110, leucine 116–tyrosine 136, and leucine 186–isoleucine 206. Heme b is bound by residues histidine 187 and histidine 202.

It belongs to the cytochrome b family. PetB subfamily. As to quaternary structure, the 4 large subunits of the cytochrome b6-f complex are cytochrome b6, subunit IV (17 kDa polypeptide, PetD), cytochrome f and the Rieske protein, while the 4 small subunits are PetG, PetL, PetM and PetN. The complex functions as a dimer. Heme b serves as cofactor. It depends on heme c as a cofactor.

It localises to the cellular thylakoid membrane. Component of the cytochrome b6-f complex, which mediates electron transfer between photosystem II (PSII) and photosystem I (PSI), cyclic electron flow around PSI, and state transitions. The sequence is that of Cytochrome b6 from Acaryochloris marina (strain MBIC 11017).